The following is a 156-amino-acid chain: Deoxyuridine 5'-triphosphate nucleotidohydrolase (156 aa).

Substrate-binding positions include 76-78 (RSG), N89, 93-95 (TVD), and K103.

It belongs to the dUTPase family. Mg(2+) serves as cofactor.

The enzyme catalyses dUTP + H2O = dUMP + diphosphate + H(+). It participates in pyrimidine metabolism; dUMP biosynthesis; dUMP from dCTP (dUTP route): step 2/2. This enzyme is involved in nucleotide metabolism: it produces dUMP, the immediate precursor of thymidine nucleotides and it decreases the intracellular concentration of dUTP so that uracil cannot be incorporated into DNA. The sequence is that of Deoxyuridine 5'-triphosphate nucleotidohydrolase from Rhizobium etli (strain ATCC 51251 / DSM 11541 / JCM 21823 / NBRC 15573 / CFN 42).